Consider the following 242-residue polypeptide: Probable transcriptional regulatory protein NMA1902 (242 aa).

The protein belongs to the TACO1 family.

It localises to the cytoplasm. The polypeptide is Probable transcriptional regulatory protein NMA1902 (Neisseria meningitidis serogroup A / serotype 4A (strain DSM 15465 / Z2491)).